Consider the following 121-residue polypeptide: Small ribosomal subunit protein uS13 (121 aa).

Positions 95 to 121 are disordered; sequence GLPVRGQKTKTNARTRKGKRKTVGAKS.

It belongs to the universal ribosomal protein uS13 family. As to quaternary structure, part of the 30S ribosomal subunit. Forms a loose heterodimer with protein S19. Forms two bridges to the 50S subunit in the 70S ribosome.

Its function is as follows. Located at the top of the head of the 30S subunit, it contacts several helices of the 16S rRNA. In the 70S ribosome it contacts the 23S rRNA (bridge B1a) and protein L5 of the 50S subunit (bridge B1b), connecting the 2 subunits; these bridges are implicated in subunit movement. Contacts the tRNAs in the A and P-sites. In Campylobacter jejuni subsp. jejuni serotype O:6 (strain 81116 / NCTC 11828), this protein is Small ribosomal subunit protein uS13.